Consider the following 430-residue polypeptide: MTNLNCFGRHRRRTAPHNATGSRSELVAPPIHSRINGWSSPLHSFQFIALLIFSFMAIVAFGIYVPLLPAPWSYAAYALIGSAFVLHLFSHVTAVTIDPADVNVRRRKDYSSPMPTFDNSKHPHVIDNLHCTLCEVDVSPKAKHCSTCNKCIADFDHHCKWLNNCVGGRNYWFFFTAVSSAVIGVILLIPLVLFVFIEHYVNPAVLRTAPQFQTVKGNGTWLVFLPVAPVETSSISLLVVSFITALLSLAALLLLCHLLCFHIYLLSQGISTYEYIVRKRQSPNPKEKQQVPPALPSNGATAQSLELQEPPLNCDAPLSSRSCTFKLEDRGPMPEPICAEMEEASGEHHLSYSSESATQKIAGESVMSLPVVWSLSETERPQASQVEVKPLEGRPVVQDPLGSSIMDTALVHQQLMTEQPQYLHFKQKMP.

The Cytoplasmic portion of the chain corresponds to 1 to 46 (MTNLNCFGRHRRRTAPHNATGSRSELVAPPIHSRINGWSSPLHSFQ). A helical transmembrane segment spans residues 47–67 (FIALLIFSFMAIVAFGIYVPL). Topologically, residues 68–76 (LPAPWSYAA) are lumenal. Residues 77–97 (YALIGSAFVLHLFSHVTAVTI) form a helical membrane-spanning segment. Residues 98–176 (DPADVNVRRR…GGRNYWFFFT (79 aa)) lie on the Cytoplasmic side of the membrane. The 51-residue stretch at 129–179 (LHCTLCEVDVSPKAKHCSTCNKCIADFDHHCKWLNNCVGGRNYWFFFTAVS) folds into the DHHC domain. The S-palmitoyl cysteine intermediate role is filled by Cys-159. A helical membrane pass occupies residues 177 to 197 (AVSSAVIGVILLIPLVLFVFI). Residues 198–234 (EHYVNPAVLRTAPQFQTVKGNGTWLVFLPVAPVETSS) lie on the Lumenal side of the membrane. The chain crosses the membrane as a helical span at residues 235–255 (ISLLVVSFITALLSLAALLLL). Topologically, residues 256–430 (CHLLCFHIYL…QYLHFKQKMP (175 aa)) are cytoplasmic.

This sequence belongs to the DHHC palmitoyltransferase family.

It is found in the endoplasmic reticulum membrane. It carries out the reaction L-cysteinyl-[protein] + hexadecanoyl-CoA = S-hexadecanoyl-L-cysteinyl-[protein] + CoA. Functionally, endoplasmic reticulum-localized palmitoyltransferase that could catalyze the addition of palmitate onto protein substrates. In Danio rerio (Zebrafish), this protein is Palmitoyltransferase ZDHHC11.